Reading from the N-terminus, the 607-residue chain is UvrABC system protein C (607 aa).

Positions 16–94 constitute a GIY-YIG domain; that stretch reads GRPGVYRMFD…IKEWRPPYNI (79 aa). The UVR domain maps to 203–238; that stretch reads NALTDELSGAMEQAASTLDFERAAELRDQISLLRRV.

It belongs to the UvrC family. As to quaternary structure, interacts with UvrB in an incision complex.

It is found in the cytoplasm. Its function is as follows. The UvrABC repair system catalyzes the recognition and processing of DNA lesions. UvrC both incises the 5' and 3' sides of the lesion. The N-terminal half is responsible for the 3' incision and the C-terminal half is responsible for the 5' incision. This Pseudomonas fluorescens (strain SBW25) protein is UvrABC system protein C.